The chain runs to 24 residues: Poly-His-poly-Gly peptide 1 (24 aa).

Residues 1-13 (EDDHHHHHHHHHG) are compositionally biased toward basic residues. Residues 1 to 24 (EDDHHHHHHHHHGVGGGGGGGGGG) form a disordered region. The segment covering 14 to 24 (VGGGGGGGGGG) has biased composition (gly residues).

In terms of tissue distribution, expressed by the venom gland.

The protein localises to the secreted. May serve as a metalloproteinase inhibitor during glandular storage. Their inhibition may be instantly disengaged, by dilution or physiochemical change, when venom is injected into tissue of the victim. The protein is Poly-His-poly-Gly peptide 1 of Atheris chlorechis (Western bush viper).